Reading from the N-terminus, the 149-residue chain is MERTFVMIKPDGVQRGLVGEILSRFENKGFKIVAGKFGVLAESIVDKHYEEHLAKPFYPGMKAYITSGPVFRFVLEGDNVVATVRKMNGATNPTEANPGTIRGDYALSIGKNVIHAADSPESAAREIGIHFTPAELVSYTKIDESELYE.

ATP contacts are provided by K9, F57, R85, T91, R102, and N112. The Pros-phosphohistidine intermediate role is filled by H115.

It belongs to the NDK family. Requires Mg(2+) as cofactor.

The protein resides in the cytoplasm. It carries out the reaction a 2'-deoxyribonucleoside 5'-diphosphate + ATP = a 2'-deoxyribonucleoside 5'-triphosphate + ADP. It catalyses the reaction a ribonucleoside 5'-diphosphate + ATP = a ribonucleoside 5'-triphosphate + ADP. In terms of biological role, major role in the synthesis of nucleoside triphosphates other than ATP. The ATP gamma phosphate is transferred to the NDP beta phosphate via a ping-pong mechanism, using a phosphorylated active-site intermediate. This is Nucleoside diphosphate kinase from Methanocorpusculum labreanum (strain ATCC 43576 / DSM 4855 / Z).